The sequence spans 203 residues: ATP-dependent Clp protease proteolytic subunit 2 (203 aa).

Residue S98 is the Nucleophile of the active site. Residue H123 is part of the active site.

It belongs to the peptidase S14 family. Fourteen ClpP subunits assemble into 2 heptameric rings which stack back to back to give a disk-like structure with a central cavity, resembling the structure of eukaryotic proteasomes.

Its subcellular location is the cytoplasm. The catalysed reaction is Hydrolysis of proteins to small peptides in the presence of ATP and magnesium. alpha-casein is the usual test substrate. In the absence of ATP, only oligopeptides shorter than five residues are hydrolyzed (such as succinyl-Leu-Tyr-|-NHMec, and Leu-Tyr-Leu-|-Tyr-Trp, in which cleavage of the -Tyr-|-Leu- and -Tyr-|-Trp bonds also occurs).. Its function is as follows. Cleaves peptides in various proteins in a process that requires ATP hydrolysis. Has a chymotrypsin-like activity. Plays a major role in the degradation of misfolded proteins. The protein is ATP-dependent Clp protease proteolytic subunit 2 of Chlamydia muridarum (strain MoPn / Nigg).